Here is a 115-residue protein sequence, read N- to C-terminus: Salivary protein gSG6 (115 aa).

The N-terminal stretch at Met-1–Ala-28 is a signal peptide.

Female saliva (at protein level). Distal-lateral lobes of female salivary gland (at protein level). Not detected in male salivary gland (at protein level).

The protein resides in the secreted. Required for efficient probing and blood feeding. In Anopheles gambiae (African malaria mosquito), this protein is Salivary protein gSG6.